The primary structure comprises 413 residues: Histidine--tRNA ligase (413 aa).

The protein belongs to the class-II aminoacyl-tRNA synthetase family. Homodimer.

It is found in the cytoplasm. The enzyme catalyses tRNA(His) + L-histidine + ATP = L-histidyl-tRNA(His) + AMP + diphosphate + H(+). This chain is Histidine--tRNA ligase, found in Fusobacterium nucleatum subsp. nucleatum (strain ATCC 25586 / DSM 15643 / BCRC 10681 / CIP 101130 / JCM 8532 / KCTC 2640 / LMG 13131 / VPI 4355).